Consider the following 242-residue polypeptide: 1-(5-phosphoribosyl)-5-[(5-phosphoribosylamino)methylideneamino] imidazole-4-carboxamide isomerase (242 aa).

Asp-8 serves as the catalytic Proton acceptor. The active-site Proton donor is Asp-129.

It belongs to the HisA/HisF family.

Its subcellular location is the cytoplasm. It carries out the reaction 1-(5-phospho-beta-D-ribosyl)-5-[(5-phospho-beta-D-ribosylamino)methylideneamino]imidazole-4-carboxamide = 5-[(5-phospho-1-deoxy-D-ribulos-1-ylimino)methylamino]-1-(5-phospho-beta-D-ribosyl)imidazole-4-carboxamide. It participates in amino-acid biosynthesis; L-histidine biosynthesis; L-histidine from 5-phospho-alpha-D-ribose 1-diphosphate: step 4/9. This Beijerinckia indica subsp. indica (strain ATCC 9039 / DSM 1715 / NCIMB 8712) protein is 1-(5-phosphoribosyl)-5-[(5-phosphoribosylamino)methylideneamino] imidazole-4-carboxamide isomerase.